A 276-amino-acid polypeptide reads, in one-letter code: Large ribosomal subunit protein uL2 (276 aa).

The interval 222–276 (GVAMNPIDHPLGGGEGRSSGGRHPVSPWGMPTKGYKTRDRKKASSKLIIKRRGQK) is disordered. Positions 259-276 (RDRKKASSKLIIKRRGQK) are enriched in basic residues.

The protein belongs to the universal ribosomal protein uL2 family. Part of the 50S ribosomal subunit. Forms a bridge to the 30S subunit in the 70S ribosome.

In terms of biological role, one of the primary rRNA binding proteins. Required for association of the 30S and 50S subunits to form the 70S ribosome, for tRNA binding and peptide bond formation. It has been suggested to have peptidyltransferase activity; this is somewhat controversial. Makes several contacts with the 16S rRNA in the 70S ribosome. The sequence is that of Large ribosomal subunit protein uL2 from Nitratidesulfovibrio vulgaris (strain ATCC 29579 / DSM 644 / CCUG 34227 / NCIMB 8303 / VKM B-1760 / Hildenborough) (Desulfovibrio vulgaris).